We begin with the raw amino-acid sequence, 441 residues long: tRNA (guanine(37)-N(1))-methyltransferase (441 aa).

The N-terminal 9 residues, 1 to 9, are a transit peptide targeting the mitochondrion; sequence MFAPPAARA. Residues Arg-221, 248 to 249, 276 to 277, and Asn-331 contribute to the S-adenosyl-L-methionine site; these read DL and DG.

The protein belongs to the class I-like SAM-binding methyltransferase superfamily. TRM5/TYW2 family. In terms of assembly, monomer.

The protein resides in the mitochondrion matrix. It is found in the nucleus. The protein localises to the cytoplasm. It carries out the reaction guanosine(37) in tRNA + S-adenosyl-L-methionine = N(1)-methylguanosine(37) in tRNA + S-adenosyl-L-homocysteine + H(+). Functionally, specifically methylates the N1 position of guanosine-37 in various cytoplasmic and mitochondrial tRNAs. Methylation is not dependent on the nature of the nucleoside 5' of the target nucleoside. This is the first step in the biosynthesis of wybutosine (yW), a modified base adjacent to the anticodon of tRNAs and required for accurate decoding. The protein is tRNA (guanine(37)-N(1))-methyltransferase of Phaeosphaeria nodorum (strain SN15 / ATCC MYA-4574 / FGSC 10173) (Glume blotch fungus).